We begin with the raw amino-acid sequence, 263 residues long: Small ribosomal subunit protein eS1 (263 aa).

Residues His-235–Val-263 form a disordered region. Over residues Glu-244–Gly-254 the composition is skewed to basic and acidic residues.

The protein belongs to the eukaryotic ribosomal protein eS1 family. In terms of assembly, component of the small ribosomal subunit. Mature ribosomes consist of a small (40S) and a large (60S) subunit. The 40S subunit contains about 33 different proteins and 1 molecule of RNA (18S). The 60S subunit contains about 49 different proteins and 3 molecules of RNA (28S, 5.8S and 5S).

It is found in the cytoplasm. In Bombyx mori (Silk moth), this protein is Small ribosomal subunit protein eS1.